We begin with the raw amino-acid sequence, 62 residues long: Sauvatide (62 aa).

The first 24 residues, Met1–Gly24, serve as a signal peptide directing secretion. Residues Glu25–Glu46 constitute a propeptide that is removed on maturation. Lys58 carries the post-translational modification Lysine amide.

As to expression, expressed by the skin glands.

The protein resides in the secreted. Its function is as follows. Induces contraction of smooth muscle in isolated rat urinary bladder with an EC(50) value of 2.2nM. The protein is Sauvatide of Phyllomedusa sauvagei (Sauvage's leaf frog).